Reading from the N-terminus, the 364-residue chain is Tubulin alpha-2 chain (364 aa).

5 residues coordinate GTP: G59, T60, T94, N121, and N144. Residue E170 is part of the active site.

This sequence belongs to the tubulin family. Dimer of alpha and beta chains. A typical microtubule is a hollow water-filled tube with an outer diameter of 25 nm and an inner diameter of 15 nM. Alpha-beta heterodimers associate head-to-tail to form protofilaments running lengthwise along the microtubule wall with the beta-tubulin subunit facing the microtubule plus end conferring a structural polarity. Microtubules usually have 13 protofilaments but different protofilament numbers can be found in some organisms and specialized cells. It depends on Mg(2+) as a cofactor. Undergoes a tyrosination/detyrosination cycle, the cyclic removal and re-addition of a C-terminal tyrosine residue by the enzymes tubulin tyrosine carboxypeptidase (TTCP) and tubulin tyrosine ligase (TTL), respectively.

It is found in the cytoplasm. The protein resides in the cytoskeleton. The enzyme catalyses GTP + H2O = GDP + phosphate + H(+). In terms of biological role, tubulin is the major constituent of microtubules, a cylinder consisting of laterally associated linear protofilaments composed of alpha- and beta-tubulin heterodimers. Microtubules grow by the addition of GTP-tubulin dimers to the microtubule end, where a stabilizing cap forms. Below the cap, tubulin dimers are in GDP-bound state, owing to GTPase activity of alpha-tubulin. In Anemia phyllitidis (Fern), this protein is Tubulin alpha-2 chain (TUBA2).